Reading from the N-terminus, the 446-residue chain is Na(+)-translocating NADH-quinone reductase subunit A (446 aa).

It belongs to the NqrA family. In terms of assembly, composed of six subunits; NqrA, NqrB, NqrC, NqrD, NqrE and NqrF.

It catalyses the reaction a ubiquinone + n Na(+)(in) + NADH + H(+) = a ubiquinol + n Na(+)(out) + NAD(+). Its function is as follows. NQR complex catalyzes the reduction of ubiquinone-1 to ubiquinol by two successive reactions, coupled with the transport of Na(+) ions from the cytoplasm to the periplasm. NqrA to NqrE are probably involved in the second step, the conversion of ubisemiquinone to ubiquinol. The sequence is that of Na(+)-translocating NADH-quinone reductase subunit A from Aliivibrio salmonicida (strain LFI1238) (Vibrio salmonicida (strain LFI1238)).